Reading from the N-terminus, the 218-residue chain is 7-cyano-7-deazaguanine synthase (218 aa).

ATP is bound at residue 10-20 (FSGGQDSTTCL). Zn(2+) is bound by residues C186, C195, C198, and C201.

Belongs to the QueC family. Homodimer. It depends on Zn(2+) as a cofactor.

It catalyses the reaction 7-carboxy-7-deazaguanine + NH4(+) + ATP = 7-cyano-7-deazaguanine + ADP + phosphate + H2O + H(+). The protein operates within purine metabolism; 7-cyano-7-deazaguanine biosynthesis. Functionally, catalyzes the ATP-dependent conversion of 7-carboxy-7-deazaguanine (CDG) to 7-cyano-7-deazaguanine (preQ(0)). This chain is 7-cyano-7-deazaguanine synthase, found in Exiguobacterium sibiricum (strain DSM 17290 / CCUG 55495 / CIP 109462 / JCM 13490 / 255-15).